Reading from the N-terminus, the 334-residue chain is Protein-methionine-sulfoxide reductase catalytic subunit MsrP (334 aa).

The tat-type signal signal peptide spans 1-44 (MKKKQFLKESDVTAESVFFMKRRQVLKALGISAAALSLPHAAHA). Residues asparagine 88, 91 to 92 (YE), cysteine 146, threonine 181, asparagine 233, arginine 238, and 249 to 251 (GIK) each bind Mo-molybdopterin.

The protein belongs to the MsrP family. As to quaternary structure, heterodimer of a catalytic subunit (MsrP) and a heme-binding subunit (MsrQ). Mo-molybdopterin serves as cofactor. Predicted to be exported by the Tat system. The position of the signal peptide cleavage has not been experimentally proven.

It is found in the periplasm. The enzyme catalyses L-methionyl-[protein] + a quinone + H2O = L-methionyl-(S)-S-oxide-[protein] + a quinol. It carries out the reaction L-methionyl-[protein] + a quinone + H2O = L-methionyl-(R)-S-oxide-[protein] + a quinol. Functionally, part of the MsrPQ system that repairs oxidized periplasmic proteins containing methionine sulfoxide residues (Met-O), using respiratory chain electrons. Thus protects these proteins from oxidative-stress damage caused by reactive species of oxygen and chlorine generated by the host defense mechanisms. MsrPQ is essential for the maintenance of envelope integrity under bleach stress, rescuing a wide series of structurally unrelated periplasmic proteins from methionine oxidation, including the primary periplasmic chaperone SurA and the lipoprotein Pal. The catalytic subunit MsrP is non-stereospecific, being able to reduce both (R-) and (S-) diastereoisomers of methionine sulfoxide. The sequence is that of Protein-methionine-sulfoxide reductase catalytic subunit MsrP from Escherichia coli O139:H28 (strain E24377A / ETEC).